The following is a 455-amino-acid chain: Ornithine decarboxylase (455 aa).

The residue at position 67 (lysine 67) is an N6-(pyridoxal phosphate)lysine. Pyridoxal 5'-phosphate is bound by residues serine 197, glycine 234, and 271–274 (EPGR). Serine 297 carries the phosphoserine; by CK2 modification. Substrate is bound at residue 325–326 (YD). The active-site Proton donor; shared with dimeric partner is the cysteine 354. S-nitrosocysteine is present on cysteine 354. Residue aspartate 355 coordinates substrate. Tyrosine 383 contributes to the pyridoxal 5'-phosphate binding site.

It belongs to the Orn/Lys/Arg decarboxylase class-II family. In terms of assembly, homodimer. Only the dimer is catalytically active, as the active sites are constructed of residues from both monomers. The cofactor is pyridoxal 5'-phosphate.

The enzyme catalyses L-ornithine + H(+) = putrescine + CO2. Its pathway is amine and polyamine biosynthesis; putrescine biosynthesis via L-ornithine pathway; putrescine from L-ornithine: step 1/1. Its activity is regulated as follows. Inhibited by antizymes (AZs) OAZ1, OAZ2 and OAZ3 in response to polyamine levels. AZs inhibit the assembly of the functional homodimer by binding to ODC monomers. Additionally, OAZ1 targets ODC monomers for ubiquitin-independent proteolytic destruction by the 26S proteasome. Its function is as follows. Catalyzes the first and rate-limiting step of polyamine biosynthesis that converts ornithine into putrescine, which is the precursor for the polyamines, spermidine and spermine. Polyamines are essential for cell proliferation and are implicated in cellular processes, ranging from DNA replication to apoptosis. This chain is Ornithine decarboxylase (ODC1), found in Cricetulus griseus (Chinese hamster).